The sequence spans 512 residues: Putative B3 domain-containing protein REM4 (512 aa).

Residues 11–103 constitute a DNA-binding region (TF-B3 1); it reads NKAFFIIDLS…VFHVSPFGRS (93 aa). The disordered stretch occupies residues 111 to 145; the sequence is SSSTSDDDDDERTVFDDDEDDDVGDDDDNSISEDD. Positions 115–145 are enriched in acidic residues; the sequence is SDDDDDERTVFDDDEDDDVGDDDDNSISEDD. 2 DNA-binding regions (TF-B3) span residues 169–265 and 307–403; these read YLVA…LCPN and ILTF…CSKV. The disordered stretch occupies residues 408–465; the sequence is SSDGHKTADRKPRMTDQAPLAEEQTDNRVEKRAQVTEEGGPSRSTRADPGNLQQKQPC. Basic and acidic residues-rich tracts occupy residues 410-421 and 432-442; these read DGHKTADRKPRM and TDNRVEKRAQV.

Its subcellular location is the nucleus. The sequence is that of Putative B3 domain-containing protein REM4 (REM4) from Arabidopsis thaliana (Mouse-ear cress).